The sequence spans 173 residues: C-phycocyanin beta subunit (173 aa).

Asparagine 73 bears the N4-methylasparagine mark. 2 residues coordinate (2R,3E)-phycocyanobilin: cysteine 83 and cysteine 154.

Belongs to the phycobiliprotein family. In terms of assembly, heterodimer of an alpha and a beta subunit. Part of 2 PBS rod complexes, the conventional PBS rod and a photosystem I-specific CpcL-PBS rod. Contains two covalently linked bilin chromophores.

Its subcellular location is the cellular thylakoid membrane. Its function is as follows. Light-harvesting photosynthetic bile pigment-protein from the phycobiliprotein complex (phycobilisome, PBS). Phycocyanin is the major phycobiliprotein in the PBS rod. The sequence is that of C-phycocyanin beta subunit (cpcB) from Nostoc sp. (strain PCC 7120 / SAG 25.82 / UTEX 2576).